Consider the following 314-residue polypeptide: uncharacterized protein (314 aa).

The first 24 residues, 1–24, serve as a signal peptide directing secretion; it reads MKRRRRWRGWLLFPALCFCLLCEA. N-linked (GlcNAc...) asparagine; by host glycans are attached at residues N28, N43, N57, N77, N101, N102, N109, N151, N170, N217, N223, N252, N255, and N268. Residues 47 to 114 show a composition bias toward low complexity; that stretch reads ATTGTTTTSP…TIGTNATSPS (68 aa). The tract at residues 47 to 116 is disordered; the sequence is ATTGTTTTSP…GTNATSPSPS (70 aa).

The protein belongs to the HHV-5 UL116 protein family. In terms of assembly, interacts with gH. Interacts with UL148. In terms of processing, highly glycosylated.

The protein localises to the virion. The protein resides in the host endoplasmic reticulum. Its function is as follows. Chaperone protein that cooperates with UL148 to regulate the abundance of gH complexes in virion. First interactor of gH in the host endoplasmic reticulum, regulates the early folding steps of virion assembly. Then, UL148 is recruited and favors the binding of gL. This is an uncharacterized protein from Homo sapiens (Human).